The following is a 240-amino-acid chain: Transcriptional activator protein VanR (240 aa).

An HTH luxR-type domain is found at 169-234 (DAKPRAVLTA…QAITKAILGG (66 aa)). A DNA-binding region (H-T-H motif) is located at residues 193-212 (AWEIATIINTSERTVKFHFS).

Belongs to the autoinducer-regulated transcriptional regulatory protein family.

Functionally, probable transcriptional activator. Binds to autoinducer molecule ODHL. The sequence is that of Transcriptional activator protein VanR (vanR) from Vibrio anguillarum (Listonella anguillarum).